The sequence spans 190 residues: Dynactin subunit 6 (190 aa).

Thr-186 bears the Phosphothreonine; by CDK1 mark.

It belongs to the dynactin subunits 5/6 family. Dynactin subunit 6 subfamily. As to quaternary structure, subunit of dynactin, a multiprotein complex part of a tripartite complex with dynein and a adapter, such as BICDL1, BICD2 or HOOK3. The dynactin complex is built around ACTR1A/ACTB filament and consists of an actin-related filament composed of a shoulder domain, a pointed end and a barbed end. Its length is defined by its flexible shoulder domain. The soulder is composed of 2 DCTN1 subunits, 4 DCTN2 and 2 DCTN3. The 4 DCNT2 (via N-terminus) bind the ACTR1A filament and act as molecular rulers to determine the length. The pointed end is important for binding dynein-dynactin cargo adapters. Consists of 4 subunits: ACTR10, DCNT4, DCTN5 and DCTN6. Within the complex DCTN6 forms a heterodimer with DCTN5. The barbed end is composed of a CAPZA1:CAPZB heterodimers, which binds ACTR1A/ACTB filament and dynactin and stabilizes dynactin. Interacts with PLK1. Interacts with N4BP2L1. In terms of processing, phosphorylation at Thr-186 by CDK1 during mitotic prometaphase creates a binding site for PLK1 that facilitates its recruitment to kinetochores. In terms of tissue distribution, ubiquitous.

The protein resides in the cytoplasm. It is found in the cytoskeleton. Its subcellular location is the chromosome. It localises to the centromere. The protein localises to the kinetochore. Its function is as follows. Part of the dynactin complex that activates the molecular motor dynein for ultra-processive transport along microtubules. This is Dynactin subunit 6 from Homo sapiens (Human).